The sequence spans 184 residues: Peptide methionine sulfoxide reductase (184 aa).

Residue Ser58 is modified to Phosphoserine.

Belongs to the MsrA Met sulfoxide reductase family.

It catalyses the reaction L-methionyl-[protein] + [thioredoxin]-disulfide + H2O = L-methionyl-(S)-S-oxide-[protein] + [thioredoxin]-dithiol. The enzyme catalyses [thioredoxin]-disulfide + L-methionine + H2O = L-methionine (S)-S-oxide + [thioredoxin]-dithiol. In terms of biological role, has an important function as a repair enzyme for proteins that have been inactivated by oxidation. Catalyzes the reversible oxidation-reduction of methionine sulfoxide in proteins to methionine. Also able to reduce dimethyl sulfoxide (DMSO) as well, with DMS as the product. This Saccharomyces cerevisiae (strain ATCC 204508 / S288c) (Baker's yeast) protein is Peptide methionine sulfoxide reductase (MXR1).